The primary structure comprises 181 residues: Ribulose bisphosphate carboxylase small subunit, chloroplastic 1 (181 aa).

The transit peptide at 1–54 (MASSMLSSAAVVTSPAQATMVAPFTGLKSSSAFPVTRKANNDITSIVSNGGRVS) directs the protein to the chloroplast.

Belongs to the RuBisCO small chain family. Heterohexadecamer of 8 large and 8 small subunits.

It is found in the plastid. The protein resides in the chloroplast. RuBisCO catalyzes two reactions: the carboxylation of D-ribulose 1,5-bisphosphate, the primary event in carbon dioxide fixation, as well as the oxidative fragmentation of the pentose substrate. Both reactions occur simultaneously and in competition at the same active site. Although the small subunit is not catalytic it is essential for maximal activity. The protein is Ribulose bisphosphate carboxylase small subunit, chloroplastic 1 of Brassica napus (Rape).